The chain runs to 290 residues: Elongation factor Ts (290 aa).

Positions 81–84 are involved in Mg(2+) ion dislocation from EF-Tu; that stretch reads TDFV.

Belongs to the EF-Ts family.

It is found in the cytoplasm. In terms of biological role, associates with the EF-Tu.GDP complex and induces the exchange of GDP to GTP. It remains bound to the aminoacyl-tRNA.EF-Tu.GTP complex up to the GTP hydrolysis stage on the ribosome. The chain is Elongation factor Ts from Saccharophagus degradans (strain 2-40 / ATCC 43961 / DSM 17024).